We begin with the raw amino-acid sequence, 510 residues long: Histidine ammonia-lyase (510 aa).

A cross-link (5-imidazolinone (Ala-Gly)) is located at residues 143-145 (ASG). The residue at position 144 (Ser144) is a 2,3-didehydroalanine (Ser).

It belongs to the PAL/histidase family. Contains an active site 4-methylidene-imidazol-5-one (MIO), which is formed autocatalytically by cyclization and dehydration of residues Ala-Ser-Gly.

It is found in the cytoplasm. It catalyses the reaction L-histidine = trans-urocanate + NH4(+). It functions in the pathway amino-acid degradation; L-histidine degradation into L-glutamate; N-formimidoyl-L-glutamate from L-histidine: step 1/3. The sequence is that of Histidine ammonia-lyase from Aliivibrio fischeri (strain ATCC 700601 / ES114) (Vibrio fischeri).